The chain runs to 71 residues: UPF0352 protein Swoo_2786 (71 aa).

Belongs to the UPF0352 family.

This is UPF0352 protein Swoo_2786 from Shewanella woodyi (strain ATCC 51908 / MS32).